A 1069-amino-acid polypeptide reads, in one-letter code: Protogenin B (1069 aa).

The signal sequence occupies residues 1–26 (MGSVRWKTHQQWLIIFWILSFSGVFG). At 27–936 (FSELWFSIEP…LYHIDEKSMS (910 aa)) the chain is on the extracellular side. Ig-like domains lie at 30–117 (LWFS…ARLT), 122–208 (LVFS…AELV), 221–308 (PLII…GNVT), and 312–396 (PSLV…SRLI). 2 disulfide bridges follow: cysteine 51–cysteine 100 and cysteine 143–cysteine 191. N-linked (GlcNAc...) asparagine glycosylation is found at asparagine 81, asparagine 88, asparagine 180, and asparagine 229. An intrachain disulfide couples cysteine 242 to cysteine 290. N-linked (GlcNAc...) asparagine glycans are attached at residues asparagine 299 and asparagine 306. The segment at 317-336 (KPESQTRPRAGTARFSCQAE) is disordered. Cysteine 333 and cysteine 380 form a disulfide bridge. Fibronectin type-III domains are found at residues 406 to 500 (APRN…TLED), 502 to 601 (PLRT…TPKT), 608 to 701 (PAPN…CPST), 711 to 804 (PPDH…TLLE), and 809 to 904 (PPES…VKGK). Residues asparagine 458, asparagine 473, and asparagine 560 are each glycosylated (N-linked (GlcNAc...) asparagine). The segment covering 590–605 (PSAWSSHRTPKTSSAT) has biased composition (polar residues). Residues 590–609 (PSAWSSHRTPKTSSATVPPA) form a disordered region. N-linked (GlcNAc...) asparagine glycosylation is found at asparagine 618, asparagine 720, and asparagine 834. A helical transmembrane segment spans residues 937–957 (GIIVGVCIALSCIILCIFILL). Residues 958–1069 (SKTQTQKSAS…KTVLCYEDEA (112 aa)) are Cytoplasmic-facing.

The protein belongs to the immunoglobulin superfamily. DCC family. Initially expressed in the ventral forebrain and ventral spinal cord. Later, also expressed in the midbrain and in parts of the diencephalon and hindbrain.

The protein localises to the membrane. Functionally, may play a role in anteroposterior axis elongation. This Danio rerio (Zebrafish) protein is Protogenin B.